A 507-amino-acid polypeptide reads, in one-letter code: ATP synthase subunit alpha, chloroplastic (507 aa).

Position 170 to 177 (170 to 177) interacts with ATP; the sequence is GDRQTGKT.

It belongs to the ATPase alpha/beta chains family. As to quaternary structure, F-type ATPases have 2 components, CF(1) - the catalytic core - and CF(0) - the membrane proton channel. CF(1) has five subunits: alpha(3), beta(3), gamma(1), delta(1), epsilon(1). CF(0) has four main subunits: a, b, b' and c.

It localises to the plastid. Its subcellular location is the chloroplast thylakoid membrane. The catalysed reaction is ATP + H2O + 4 H(+)(in) = ADP + phosphate + 5 H(+)(out). In terms of biological role, produces ATP from ADP in the presence of a proton gradient across the membrane. The alpha chain is a regulatory subunit. This is ATP synthase subunit alpha, chloroplastic from Ipomoea purpurea (Common morning glory).